The chain runs to 311 residues: Taste receptor type 2 member 9 (311 aa).

At 1–9 the chain is on the extracellular side; the sequence is MPSTIEAIY. A helical membrane pass occupies residues 10–32; it reads IILIAGELTIGIWGNGFIVLVNC. Topologically, residues 33–52 are cytoplasmic; it reads IDWLKRRDVSLIDIILISLA. The chain crosses the membrane as a helical span at residues 53–72; the sequence is ISRICLLCVISLDGFFILLF. Residues 73-86 lie on the Extracellular side of the membrane; the sequence is PGTYDINVLESIMD. The helical transmembrane segment at 87–109 threads the bilayer; it reads AVWTFANNSSLWFTSCLSIFYLL. Topologically, residues 110–128 are cytoplasmic; sequence KIANISHPFFFWLKLKINK. A helical transmembrane segment spans residues 129-146; sequence VILAILLGSFLISLIISF. The Extracellular portion of the chain corresponds to 147 to 179; that stretch reads PINGXWYHLFKVSHEENITWAFKVSTIPGAFKQ. N-linked (GlcNAc...) asparagine glycosylation occurs at asparagine 163. Residues 180–202 traverse the membrane as a helical segment; the sequence is LTLNLGAMVPFMLCLISFFLLLF. The Cytoplasmic segment spans residues 203–233; it reads SLVRHTKQIQLHATGLRDPSTEAHMRAIKAV. Residues 234–256 form a helical membrane-spanning segment; that stretch reads IIFLLLLIVYYPVFLVMTSSTLI. At 257–260 the chain is on the extracellular side; it reads PQGK. Residues 261–283 form a helical membrane-spanning segment; the sequence is LVLMIGDIVTVIFPSSHSFILIM. At 284 to 311 the chain is on the cytoplasmic side; sequence GNSKLREAFLKMLRFVKGFLRRRKPFGP.

This sequence belongs to the G-protein coupled receptor T2R family.

The protein localises to the membrane. Functionally, gustducin-coupled receptor implicated in the perception of bitter compounds in the oral cavity and the gastrointestinal tract. Signals through PLCB2 and the calcium-regulated cation channel TRPM5. In Papio hamadryas (Hamadryas baboon), this protein is Taste receptor type 2 member 9 (TAS2R9).